Here is a 310-residue protein sequence, read N- to C-terminus: N-acetylmuramic acid 6-phosphate etherase (310 aa).

An SIS domain is found at 64 to 227 (ITARLKSKGR…STSVMIKLGK (164 aa)). The active-site Proton donor is glutamate 92. The active site involves glutamate 123.

Belongs to the GCKR-like family. MurNAc-6-P etherase subfamily. Homodimer.

It catalyses the reaction N-acetyl-D-muramate 6-phosphate + H2O = N-acetyl-D-glucosamine 6-phosphate + (R)-lactate. Its pathway is amino-sugar metabolism; N-acetylmuramate degradation. Its function is as follows. Specifically catalyzes the cleavage of the D-lactyl ether substituent of MurNAc 6-phosphate, producing GlcNAc 6-phosphate and D-lactate. The polypeptide is N-acetylmuramic acid 6-phosphate etherase (Prochlorococcus marinus (strain NATL1A)).